Here is a 425-residue protein sequence, read N- to C-terminus: Enolase (425 aa).

Position 163 (Q163) interacts with (2R)-2-phosphoglycerate. E205 (proton donor) is an active-site residue. Mg(2+)-binding residues include D242, E285, and D312. 4 residues coordinate (2R)-2-phosphoglycerate: K337, R366, S367, and K388. K337 functions as the Proton acceptor in the catalytic mechanism.

It belongs to the enolase family. The cofactor is Mg(2+).

The protein localises to the cytoplasm. It localises to the secreted. It is found in the cell surface. The catalysed reaction is (2R)-2-phosphoglycerate = phosphoenolpyruvate + H2O. The protein operates within carbohydrate degradation; glycolysis; pyruvate from D-glyceraldehyde 3-phosphate: step 4/5. Functionally, catalyzes the reversible conversion of 2-phosphoglycerate (2-PG) into phosphoenolpyruvate (PEP). It is essential for the degradation of carbohydrates via glycolysis. This is Enolase from Cereibacter sphaeroides (strain ATCC 17029 / ATH 2.4.9) (Rhodobacter sphaeroides).